Reading from the N-terminus, the 317-residue chain is Cyclin-dependent kinase 1 (317 aa).

The region spanning 7-292 (YQRQEKVGEG…AKRALIHPYF (286 aa)) is the Protein kinase domain. ATP contacts are provided by residues 13-21 (VGEGTYGVV) and Lys-37. The residue at position 17 (Thr-17) is a Phosphothreonine. Tyr-18 bears the Phosphotyrosine; by SWE1 mark. Asp-133 (proton acceptor) is an active-site residue. The residue at position 166 (Thr-166) is a Phosphothreonine; by CAK. Residues 296 to 317 (DDRDHNNYNEDNIGIDKHQNMQ) are disordered.

The protein belongs to the protein kinase superfamily. CMGC Ser/Thr protein kinase family. CDC2/CDKX subfamily. In terms of assembly, forms several complexes with cyclins CCN1, CLB2, CLN3, and HGC1. The CDC28-CCN1 complex associates with septin CDC11 upon hyphal induction. Interacts with IQG1, RFA2, and HSP90. Phosphorylated at Tyr-18 by SWE1 in a cell cycle-dependent manner. Yeast-form and hyphal cells display similar dynamics of phosphorylation and dephosphorylation of Tyr-18. Tyr-18 phosphorylation leads to inhibition of CDC28 kinase activity.

The catalysed reaction is L-seryl-[protein] + ATP = O-phospho-L-seryl-[protein] + ADP + H(+). The enzyme catalyses L-threonyl-[protein] + ATP = O-phospho-L-threonyl-[protein] + ADP + H(+). With respect to regulation, phosphorylation at Thr-17 or Tyr-18 inactivates the enzyme, while phosphorylation at Thr-166 activates it. Cyclin-dependent kinase that acts as a master regulator of the mitotic and meiotic cell cycles. May drive the G1-S transition. Plays a role in mitotic exit. Plays a role in the expression of morphology-related transcription factors, and especially hyphae-specific genes. Binds distinct cyclin subunits as cells progress through the division cycle or flamentous growth. The CDC28-CLB2 complex regulates cytokinesis partly by phosphorylating the actomyosin ring component IQG1. The CDC28-CLN3 complex phosphorylates SLA1 which regulates cortical actin patch dynamics. The CDC28-CCN1 complex phosphorylates CDC11 and SEC2 upon induction of filamentous growth. The CDC28-HGC1 complex also phosphorylates SEC2 and maintains CDC11 phosphorylation throughout hyphal growth. Moreover, the CDC28-HGC1 complex phosphorylates and prevents RGA2 from localizing to hyphal tips, leading to localized CDC42 activation for hyphal extension. CDC28-HGC1 phosphorylation of EFG1 represses cell separation genes during hyphal growth. Additional substrates for CDC28 are RFA2 in G1-phase; MOB2, which is required for the maintenance of polarisome components and for inhibition of cell separation in hyphae; and GIN4 to regulate its association to SEP7 and subsequent septin ring assembly. This chain is Cyclin-dependent kinase 1, found in Candida albicans (strain SC5314 / ATCC MYA-2876) (Yeast).